A 173-amino-acid polypeptide reads, in one-letter code: ATP synthase subunit d, mitochondrial (173 aa).

The N-terminal 23 residues, 1–23, are a transit peptide targeting the mitochondrion; it reads MAARSAALKIDWVKVTSSLGLRG.

It belongs to the ATPase d subunit family. In terms of assembly, F-type ATPases have 2 components, CF(1) - the catalytic core - and CF(0) - the membrane proton channel. In yeast, the dimeric form of ATP synthase consists of 17 polypeptides: alpha, beta, gamma, delta, epsilon, 4 (B), 5 (OSCP), 6 (A), 8, 9 (C), d, E (Tim11), f, g, h, i/j and k.

It is found in the mitochondrion inner membrane. In terms of biological role, mitochondrial membrane ATP synthase (F(1)F(0) ATP synthase or Complex V) produces ATP from ADP in the presence of a proton gradient across the membrane which is generated by electron transport complexes of the respiratory chain. F-type ATPases consist of two structural domains, F(1) - containing the extramembraneous catalytic core, and F(0) - containing the membrane proton channel, linked together by a central stalk and a peripheral stalk. During catalysis, ATP synthesis in the catalytic domain of F(1) is coupled via a rotary mechanism of the central stalk subunits to proton translocation. Part of the complex F(0) domain and the peripheric stalk, which acts as a stator to hold the catalytic alpha(3)beta(3) subcomplex and subunit a/ATP6 static relative to the rotary elements. This Aspergillus terreus (strain NIH 2624 / FGSC A1156) protein is ATP synthase subunit d, mitochondrial (atp7).